The sequence spans 290 residues: Enoyl-CoA hydratase, mitochondrial (290 aa).

The transit peptide at 1-27 (MATLRVLLSCVRGPLRPPVRCPAWRPF) directs the protein to the mitochondrion. Residue Thr46 is modified to Phosphothreonine. Position 98–101 (98–101 (ADIK)) interacts with substrate. Residue Lys101 is modified to N6-acetyllysine; alternate. Lys101 is modified (N6-succinyllysine; alternate). Residue Ser114 is modified to Phosphoserine. The residue at position 115 (Lys115) is an N6-acetyllysine; alternate. At Lys115 the chain carries N6-succinyllysine; alternate. Residue Lys118 is modified to N6-acetyllysine. A substrate-binding site is contributed by Gly141. At Lys204 the chain carries N6-succinyllysine. Lys211 is modified (N6-acetyllysine).

It belongs to the enoyl-CoA hydratase/isomerase family. As to quaternary structure, homohexamer; dimer of trimers.

The protein resides in the mitochondrion matrix. It catalyses the reaction a (3S)-3-hydroxyacyl-CoA = a (2E)-enoyl-CoA + H2O. The catalysed reaction is a (3E)-enoyl-CoA = a 4-saturated (2E)-enoyl-CoA. The enzyme catalyses (3E)-hexenoyl-CoA = (2E)-hexenoyl-CoA. It carries out the reaction (3S)-3-hydroxybutanoyl-CoA = (2E)-butenoyl-CoA + H2O. It catalyses the reaction 3-hydroxyisovaleryl-CoA = 3-methylbut-2-enoyl-CoA + H2O. The catalysed reaction is 3-hydroxypropanoyl-CoA = acryloyl-CoA + H2O. The enzyme catalyses 3-hydroxybutanoyl-CoA = (2E)-butenoyl-CoA + H2O. It carries out the reaction 2-methylpropenoyl-CoA + H2O = (S)-3-hydroxyisobutanoyl-CoA. It catalyses the reaction (3S)-hydroxyhexanoyl-CoA = (2E)-hexenoyl-CoA + H2O. The catalysed reaction is (3S)-hydroxydecanoyl-CoA = (2E)-decenoyl-CoA + H2O. Its pathway is lipid metabolism; fatty acid beta-oxidation. Its function is as follows. Converts unsaturated trans-2-enoyl-CoA species ((2E)-enoyl-CoA) to the corresponding (3S)-3-hydroxyacyl-CoA species through addition of a water molecule to the double bond. Catalyzes the hydration of medium- and short-chained fatty enoyl-CoA thioesters from 4 carbons long (C4) up to C16. Has high substrate specificity for crotonyl-CoA ((2E)-butenoyl-CoA) and moderate specificity for acryloyl-CoA, 3-methylcrotonyl-CoA (3-methyl-(2E)-butenoyl-CoA) and methacrylyl-CoA ((2E)-2-methylpropenoyl-CoA). Can bind tiglyl-CoA (2-methylcrotonoyl-CoA), but hydrates only a small amount of this substrate. Plays a key role in the beta-oxidation spiral of short- and medium-chain fatty acid oxidation. At a lower rate than the hydratase reaction, catalyzes the isomerase reaction of trans-3-enoyl-CoA species (such as (3E)-hexenoyl-CoA) to trans-2-enoyl-CoA species (such as (2E)-hexenoyl-CoA), which are subsequently hydrated to 3(S)-3-hydroxyacyl-CoA species (such as (3S)-hydroxyhexanoyl-CoA). The protein is Enoyl-CoA hydratase, mitochondrial (ECHS1) of Pongo abelii (Sumatran orangutan).